A 484-amino-acid polypeptide reads, in one-letter code: Phosphoenolpyruvate carboxylase (484 aa).

Belongs to the PEPCase type 2 family. Homotetramer. It depends on Mg(2+) as a cofactor.

It catalyses the reaction oxaloacetate + phosphate = phosphoenolpyruvate + hydrogencarbonate. Functionally, catalyzes the irreversible beta-carboxylation of phosphoenolpyruvate (PEP) to form oxaloacetate (OAA), a four-carbon dicarboxylic acid source for the tricarboxylic acid cycle. The sequence is that of Phosphoenolpyruvate carboxylase from Methanospirillum hungatei JF-1 (strain ATCC 27890 / DSM 864 / NBRC 100397 / JF-1).